The primary structure comprises 646 residues: 1-deoxy-D-xylulose-5-phosphate synthase (646 aa).

Thiamine diphosphate is bound by residues His-86 and Ala-127–Ser-129. Residue Asp-158 coordinates Mg(2+). Residues Gly-159–Ala-160, Asn-188, Tyr-295, and Glu-377 each bind thiamine diphosphate. Asn-188 contacts Mg(2+).

Belongs to the transketolase family. DXPS subfamily. In terms of assembly, homodimer. Mg(2+) serves as cofactor. Thiamine diphosphate is required as a cofactor.

The catalysed reaction is D-glyceraldehyde 3-phosphate + pyruvate + H(+) = 1-deoxy-D-xylulose 5-phosphate + CO2. It participates in metabolic intermediate biosynthesis; 1-deoxy-D-xylulose 5-phosphate biosynthesis; 1-deoxy-D-xylulose 5-phosphate from D-glyceraldehyde 3-phosphate and pyruvate: step 1/1. In terms of biological role, catalyzes the acyloin condensation reaction between C atoms 2 and 3 of pyruvate and glyceraldehyde 3-phosphate to yield 1-deoxy-D-xylulose-5-phosphate (DXP). This Burkholderia cenocepacia (strain HI2424) protein is 1-deoxy-D-xylulose-5-phosphate synthase.